Consider the following 404-residue polypeptide: AT-hook motif nuclear-localized protein 3 (404 aa).

Disordered stretches follow at residues 1-51 (MEER…VPPT), 70-100 (PFSL…PDGT), and 113-133 (SVPL…GKSN). Polar residues predominate over residues 7–19 (TNINNNITSSFGL). A compositionally biased stretch (pro residues) spans 35 to 51 (DPPPRPENPNPFLVPPT). The span at 71-83 (FSLTMPTENTSAE) shows a compositional bias: polar residues. The Bipartite nuclear localization signal motif lies at 86–94 (KKKRGRPRK). A DNA-binding region (a.T hook) is located at residues 86 to 98 (KKKRGRPRKYNPD). Basic residues predominate over residues 123–133 (RKRGRGRGKSN). The PPC domain occupies 163–308 (GANFTPHVLI…RFGAQPSSIS (146 aa)). A disordered region spans residues 359–404 (PFSSIPVGGGGGGEVGEEEGEEDDDELEGEDEEFGGDSQSDNEIPS). Acidic residues predominate over residues 373 to 393 (VGEEEGEEDDDELEGEDEEFG).

In terms of assembly, homodimer. Interacts with AHL4. In terms of tissue distribution, expressed in both procambium and xylem precursors of the root meristem. Also detected in the endodermis in the late elongation zone and onwards.

It is found in the nucleus. Its function is as follows. Transcription factor that specifically binds AT-rich DNA sequences related to the nuclear matrix attachment regions (MARs). Acts redundantly with AHL4 to regulate the formation of tissue boundary between the xylem and procambium in the root meristem. The chain is AT-hook motif nuclear-localized protein 3 from Arabidopsis thaliana (Mouse-ear cress).